We begin with the raw amino-acid sequence, 279 residues long: Large ribosomal subunit protein uL2 (279 aa).

Positions Ala224 to Arg279 are disordered. Over residues Val269–Arg279 the composition is skewed to basic residues.

Belongs to the universal ribosomal protein uL2 family. Part of the 50S ribosomal subunit. Forms a bridge to the 30S subunit in the 70S ribosome.

Functionally, one of the primary rRNA binding proteins. Required for association of the 30S and 50S subunits to form the 70S ribosome, for tRNA binding and peptide bond formation. It has been suggested to have peptidyltransferase activity; this is somewhat controversial. Makes several contacts with the 16S rRNA in the 70S ribosome. The sequence is that of Large ribosomal subunit protein uL2 from Cereibacter sphaeroides (strain ATCC 17029 / ATH 2.4.9) (Rhodobacter sphaeroides).